The following is a 148-amino-acid chain: 3-dehydroquinate dehydratase (148 aa).

Positions 74, 80, and 87 each coordinate substrate. The active-site Proton donor is the His100. Substrate is bound by residues 101–102 and Arg111; that span reads LS.

This sequence belongs to the type-II 3-dehydroquinase family. In terms of assembly, homododecamer.

The catalysed reaction is 3-dehydroquinate = 3-dehydroshikimate + H2O. It participates in metabolic intermediate biosynthesis; chorismate biosynthesis; chorismate from D-erythrose 4-phosphate and phosphoenolpyruvate: step 3/7. The polypeptide is 3-dehydroquinate dehydratase (yqhS) (Bacillus subtilis (strain 168)).